We begin with the raw amino-acid sequence, 724 residues long: Ribosomal protein S6 kinase alpha-1 (724 aa).

Phosphoserine is present on S54. A Protein kinase 1 domain is found at 62–310 (FELLKVLGQG…AEEIKRHIFY (249 aa)). Residues 68 to 76 (LGQGSFGKV) and K94 contribute to the ATP site. D187 (proton acceptor) is an active-site residue. A Phosphoserine; by PDPK1 modification is found at S221. At S296 the chain carries Phosphoserine. In terms of domain architecture, AGC-kinase C-terminal spans 311–380 (STIDWNKLYR…VATGLMEDDG (70 aa)). Residue T348 is modified to Phosphothreonine. Phosphoserine occurs at positions 352, 358, and 369. One can recognise a Protein kinase 2 domain in the interval 407–664 (YVVKETIGVG…AKQVLQHPWI (258 aa)). Residues 413 to 421 (IGVGSYSVC) and K436 contribute to the ATP site. The Proton acceptor role is filled by D524. T562 carries the post-translational modification Phosphothreonine. S721 bears the Phosphoserine mark.

It belongs to the protein kinase superfamily. AGC Ser/Thr protein kinase family. S6 kinase subfamily. In terms of assembly, forms a complex with either MAPK1/ERK2 or MAPK3/ERK1 in quiescent cells. Transiently dissociates following mitogenic stimulation. Interacts with ETV1/ER81 and FGFR1. It depends on Mg(2+) as a cofactor. Activated by phosphorylation at Ser-221 by PDPK1. Autophosphorylated on Ser-369, as part of the activation process. May be phosphorylated at Thr-348 and Ser-352 by MAPK1/ERK2 and MAPK3/ERK1. Post-translationally, N-terminal myristoylation results in an activated kinase in the absence of added growth factors. Intestine, thymus, and lung.

The protein localises to the nucleus. It localises to the cytoplasm. It catalyses the reaction L-seryl-[protein] + ATP = O-phospho-L-seryl-[protein] + ADP + H(+). It carries out the reaction L-threonyl-[protein] + ATP = O-phospho-L-threonyl-[protein] + ADP + H(+). Its activity is regulated as follows. Upon extracellular signal or mitogen stimulation, phosphorylated at Thr-562 in the C-terminal kinase domain (CTKD) by MAPK1/ERK2 and MAPK3/ERK1. The activated CTKD then autophosphorylates Ser-369, allowing binding of PDPK1, which in turn phosphorylates Ser-221 in the N-terminal kinase domain (NTDK) leading to the full activation of the protein and subsequent phosphorylation of the substrates by the NTKD. Its function is as follows. Serine/threonine-protein kinase that acts downstream of ERK (MAPK1/ERK2 and MAPK3/ERK1) signaling and mediates mitogenic and stress-induced activation of the transcription factors CREB1, ETV1/ER81 and NR4A1/NUR77, regulates translation through RPS6 and EIF4B phosphorylation, and mediates cellular proliferation, survival, and differentiation by modulating mTOR signaling and repressing pro-apoptotic function of BAD and DAPK1. In fibroblast, is required for EGF-stimulated phosphorylation of CREB1, which results in the subsequent transcriptional activation of several immediate-early genes. In response to mitogenic stimulation (EGF and PMA), phosphorylates and activates NR4A1/NUR77 and ETV1/ER81 transcription factors and the cofactor CREBBP. Upon insulin-derived signal, acts indirectly on the transcription regulation of several genes by phosphorylating GSK3B at 'Ser-9' and inhibiting its activity. Phosphorylates RPS6 in response to serum or EGF via an mTOR-independent mechanism and promotes translation initiation by facilitating assembly of the pre-initiation complex. In response to insulin, phosphorylates EIF4B, enhancing EIF4B affinity for the EIF3 complex and stimulating cap-dependent translation. Is involved in the mTOR nutrient-sensing pathway by directly phosphorylating TSC2 at 'Ser-1798', which potently inhibits TSC2 ability to suppress mTOR signaling, and mediates phosphorylation of RPTOR, which regulates mTORC1 activity and may promote rapamycin-sensitive signaling independently of the PI3K/AKT pathway. Also involved in feedback regulation of mTORC1 and mTORC2 by phosphorylating DEPTOR. Mediates cell survival by phosphorylating the pro-apoptotic proteins BAD and DAPK1 and suppressing their pro-apoptotic function. Promotes the survival of hepatic stellate cells by phosphorylating CEBPB in response to the hepatotoxin carbon tetrachloride (CCl4). Mediates induction of hepatocyte prolifration by TGFA through phosphorylation of CEBPB. Is involved in cell cycle regulation by phosphorylating the CDK inhibitor CDKN1B, which promotes CDKN1B association with 14-3-3 proteins and prevents its translocation to the nucleus and inhibition of G1 progression. Phosphorylates EPHA2 at 'Ser-897', the RPS6KA-EPHA2 signaling pathway controls cell migration. In response to mTORC1 activation, phosphorylates EIF4B at 'Ser-406' and 'Ser-422' which stimulates bicarbonate cotransporter SLC4A7 mRNA translation, increasing SLC4A7 protein abundance and function. The chain is Ribosomal protein S6 kinase alpha-1 (Rps6ka1) from Mus musculus (Mouse).